The sequence spans 874 residues: Alanine--tRNA ligase (874 aa).

H564, H568, C665, and H669 together coordinate Zn(2+).

Belongs to the class-II aminoacyl-tRNA synthetase family. Zn(2+) is required as a cofactor.

It localises to the cytoplasm. It carries out the reaction tRNA(Ala) + L-alanine + ATP = L-alanyl-tRNA(Ala) + AMP + diphosphate. Catalyzes the attachment of alanine to tRNA(Ala) in a two-step reaction: alanine is first activated by ATP to form Ala-AMP and then transferred to the acceptor end of tRNA(Ala). Also edits incorrectly charged Ser-tRNA(Ala) and Gly-tRNA(Ala) via its editing domain. The protein is Alanine--tRNA ligase of Polaromonas naphthalenivorans (strain CJ2).